The following is a 424-amino-acid chain: Enolase (424 aa).

Q162 is a (2R)-2-phosphoglycerate binding site. E204 (proton donor) is an active-site residue. 3 residues coordinate Mg(2+): D241, E284, and D311. (2R)-2-phosphoglycerate is bound by residues K336, R365, S366, and K387. The active-site Proton acceptor is the K336.

Belongs to the enolase family. The cofactor is Mg(2+).

Its subcellular location is the cytoplasm. The protein resides in the secreted. The protein localises to the cell surface. It carries out the reaction (2R)-2-phosphoglycerate = phosphoenolpyruvate + H2O. It participates in carbohydrate degradation; glycolysis; pyruvate from D-glyceraldehyde 3-phosphate: step 4/5. Catalyzes the reversible conversion of 2-phosphoglycerate (2-PG) into phosphoenolpyruvate (PEP). It is essential for the degradation of carbohydrates via glycolysis. The chain is Enolase from Sinorhizobium fredii (strain NBRC 101917 / NGR234).